The following is a 188-amino-acid chain: Pro-adrenomedullin (188 aa).

A signal peptide spans 1–21 (MKLVPVALMYLGSLAFLGADT). Arginine 41 bears the Arginine amide mark. A propeptide spanning residues 45–92 (ELRLSSSYPTGIADLKAGPAQTVIRPQDVKGSSRSPQASIPDAARIRV) is cleaved from the precursor. A disulfide bridge connects residues cysteine 110 and cysteine 115. The disordered stretch occupies residues 131 to 177 (DKDGVAPRSKISPQGYGRRRRRSLPEASLGRTLRSQEPQAHGAPASP). Tyrosine 146 bears the Tyrosine amide mark. A propeptide spans 153–188 (SLPEASLGRTLRSQEPQAHGAPASPAHQVLATLFRI) (preproAM C-terminal fragment).

Belongs to the adrenomedullin family. As to expression, highly expressed in adrenal glands, lung and kidney.

The protein resides in the secreted. Functionally, adrenomedullin/ADM and proadrenomedullin N-20 terminal peptide/PAMP are peptide hormones that act as potent hypotensive and vasodilatator agents. Numerous actions have been reported most related to the physiologic control of fluid and electrolyte homeostasis. Its function is as follows. ADM function is mediated by the CALCRL-RAMP2 and CALCRL-RAMP3 receptor complexes with ADM showing the highest potency for the CALCRL-RAMP2 complex. The polypeptide is Pro-adrenomedullin (ADM) (Sus scrofa (Pig)).